Reading from the N-terminus, the 249-residue chain is Probable amino-acid import ATP-binding protein YxeO (249 aa).

Positions 2–239 (ITVKNIRKAF…PKNERTKRFI (238 aa)) constitute an ABC transporter domain. Position 34–41 (34–41 (GPSGSGKS)) interacts with ATP.

Belongs to the ABC transporter superfamily. In terms of assembly, the complex is composed of two ATP-binding proteins (YxeO), two transmembrane proteins (YxeN) and a solute-binding protein (YxeM).

The protein localises to the cell membrane. Its function is as follows. Probably part of the ABC transporter complex YxeMNO that could be involved in amino-acid import. May transport S-methylcysteine. Responsible for energy coupling to the transport system. The polypeptide is Probable amino-acid import ATP-binding protein YxeO (yxeO) (Bacillus subtilis (strain 168)).